We begin with the raw amino-acid sequence, 796 residues long: Serine/threonine-protein kinase ATG1 (796 aa).

Residues 9–304 form the Protein kinase domain; the sequence is YVVGAEIGRG…FQEFFNDPVI (296 aa). ATP-binding positions include 15-23 and lysine 38; that span reads IGRGSFANV. The active-site Proton acceptor is aspartate 155. Positions 360–370 are enriched in acidic residues; the sequence is LEEEDEEEDQD. 3 disordered regions span residues 360–382, 389–408, and 450–480; these read LEEE…IQHM, LLNK…RREL, and PYTR…KVPI. Positions 389 to 403 are enriched in polar residues; that stretch reads LLNKTTQKQTEVQSQ. Positions 453 to 470 are enriched in low complexity; the sequence is RRYSSSSRSSSTGSNQRR.

This sequence belongs to the protein kinase superfamily. Ser/Thr protein kinase family. APG1/unc-51/ULK1 subfamily. Homodimer. Forms a ternary complex with ATG13 and ATG17.

The protein resides in the cytoplasm. It localises to the preautophagosomal structure membrane. It catalyses the reaction L-seryl-[protein] + ATP = O-phospho-L-seryl-[protein] + ADP + H(+). The catalysed reaction is L-threonyl-[protein] + ATP = O-phospho-L-threonyl-[protein] + ADP + H(+). Functionally, serine/threonine protein kinase involved in the cytoplasm to vacuole transport (Cvt) and found to be essential in autophagy, where it is required for the formation of autophagosomes. Involved in the clearance of protein aggregates which cannot be efficiently cleared by the proteasome. Required for selective autophagic degradation of the nucleus (nucleophagy) as well as for mitophagy which contributes to regulate mitochondrial quantity and quality by eliminating the mitochondria to a basal level to fulfill cellular energy requirements and preventing excess ROS production. Also involved in endoplasmic reticulum-specific autophagic process, in selective removal of ER-associated degradation (ERAD) substrates. Plays a key role in ATG9 and ATG23 cycling through the pre-autophagosomal structure and is necessary to promote ATG18 binding to ATG9 through phosphorylation of ATG9. Catalyzes phosphorylation of ATG4, decreasing the interaction between ATG4 and ATG8 and impairing deconjugation of PE-conjugated forms of ATG8. The sequence is that of Serine/threonine-protein kinase ATG1 from Komagataella pastoris (Yeast).